The chain runs to 357 residues: Protein RecA (357 aa).

Residue 67 to 74 (GPESSGKT) coordinates ATP.

This sequence belongs to the RecA family.

It localises to the cytoplasm. In terms of biological role, can catalyze the hydrolysis of ATP in the presence of single-stranded DNA, the ATP-dependent uptake of single-stranded DNA by duplex DNA, and the ATP-dependent hybridization of homologous single-stranded DNAs. It interacts with LexA causing its activation and leading to its autocatalytic cleavage. This is Protein RecA from Leifsonia xyli subsp. xyli (strain CTCB07).